A 166-amino-acid chain; its full sequence is Putative transcriptional regulatory protein for hcr operon (166 aa).

The HTH marR-type domain occupies 1-155 (MRKHRGKPAN…LIGLLKRLYR (155 aa)).

Functionally, may be involved in the regulation of genes for 4-hydroxybenzoyl-CoA reductase. The chain is Putative transcriptional regulatory protein for hcr operon from Thauera aromatica.